A 351-amino-acid polypeptide reads, in one-letter code: Nicotinate-nucleotide--dimethylbenzimidazole phosphoribosyltransferase (351 aa).

The active-site Proton acceptor is glutamate 317.

The protein belongs to the CobT family.

The enzyme catalyses 5,6-dimethylbenzimidazole + nicotinate beta-D-ribonucleotide = alpha-ribazole 5'-phosphate + nicotinate + H(+). It participates in nucleoside biosynthesis; alpha-ribazole biosynthesis; alpha-ribazole from 5,6-dimethylbenzimidazole: step 1/2. Functionally, catalyzes the synthesis of alpha-ribazole-5'-phosphate from nicotinate mononucleotide (NAMN) and 5,6-dimethylbenzimidazole (DMB). This chain is Nicotinate-nucleotide--dimethylbenzimidazole phosphoribosyltransferase, found in Pseudomonas putida (strain GB-1).